The chain runs to 350 residues: Vancomycin C-type resistance protein VanC2 (350 aa).

Catalysis depends on residues glutamate 14 and serine 187. The ATP-grasp domain occupies 141–343 (HQAAAAIGVQ…YQELLQKLLV (203 aa)). Residue 171–226 (IQTHGFPVFFKPNEAGSSKGITKVTCVEEIASALKEAFTYCSAVLLQKNIAGVEIG) coordinates ATP. Mg(2+) is bound by residues aspartate 297, glutamate 310, and asparagine 312. Aspartate 297, glutamate 310, and asparagine 312 together coordinate Mn(2+). Serine 321 is an active-site residue.

This sequence belongs to the D-alanine--D-alanine ligase family. Homodimer. Requires Mg(2+) as cofactor. It depends on Mn(2+) as a cofactor.

It localises to the cell membrane. It carries out the reaction D-serine + D-alanine + ATP = D-alanyl-D-serine + ADP + phosphate + H(+). It functions in the pathway cell wall biogenesis; peptidoglycan biosynthesis. Inhibited by D-cycloserine. Required for low-level resistance to the glycopeptide antibiotic vancomycin. D-alanine--D-alanine ligase of altered specificity, which catalyzes synthesis of D-Ala-D-Ser; produces a peptidoglycan which does not terminate in D-alanine but in D-serine, thus probably reducing affinity for vancomycin. Only insignificant catalytic synthesis of D-Ala-D-Ala in vitro. The polypeptide is Vancomycin C-type resistance protein VanC2 (Enterococcus casseliflavus (Enterococcus flavescens)).